The chain runs to 271 residues: Hematopoietically-expressed homeobox protein Hhex (271 aa).

An interaction with SOX13 region spans residues 1-138; that stretch reads MQFPHPGPAA…PFLQRPLHKR (138 aa). Ser-54 carries the post-translational modification Phosphoserine. The segment at residues 138-197 is a DNA-binding region (homeobox); the sequence is RKGGQVRFSNDQTVELEKKFETQKYLSPPERKRLAKMLQLSERQVKTWFQNRRAKWRRLK. Residues 138–271 form a required for WNT signaling induction region; sequence RKGGQVRFSN…EGDKGYFNAG (134 aa). Residues 195–271 form a disordered region; sequence RLKQENPQSN…EGDKGYFNAG (77 aa). Residues 212-242 show a composition bias toward polar residues; it reads LDTSCEQGQDLPSEQNKGASLDRSQCSPSPA. Acidic residues predominate over residues 245-261; that stretch reads EDPDSEISEDSDQEVDI.

As to quaternary structure, interacts with CD81; the interaction prevents nuclear translocation of HHEX. Interacts (via N-terminus) with SOX13; abolishes the SOX13-mediated inhibition of WNT-mediated transcriptional activity via competitive inhibition of the SOX13-TCF7 complex. Interacts with EIF4E; the interaction inhibits EIF4E-mediated mRNA nuclear export.

It is found in the nucleus. It localises to the nuclear body. Its subcellular location is the cytoplasm. Recognizes the DNA sequence 5'-ATTAA-3'. Transcriptional repressor. Activator of WNT-mediated transcription in conjunction with CTNNB1. Establishes anterior identity at two levels; acts early to enhance canonical WNT-signaling by repressing expression of TLE4, and acts later to inhibit NODAL-signaling by directly targeting NODAL. Inhibits EIF4E-mediated mRNA nuclear export. May play a role in hematopoietic differentiation. In Mus musculus (Mouse), this protein is Hematopoietically-expressed homeobox protein Hhex (Hhex).